Here is a 238-residue protein sequence, read N- to C-terminus: Fatty acid metabolism regulator protein (238 aa).

The HTH gntR-type domain occupies 6 to 74 (KGPASFAEKY…HGKPTRVNNF (69 aa)). The H-T-H motif DNA-binding region spans 34–53 (ERELSELIGVTRTTLREVLQ).

Homodimer.

It localises to the cytoplasm. Its function is as follows. Multifunctional regulator of fatty acid metabolism. The sequence is that of Fatty acid metabolism regulator protein from Shewanella baltica (strain OS155 / ATCC BAA-1091).